Here is a 780-residue protein sequence, read N- to C-terminus: Probable trehalase (780 aa).

The disordered stretch occupies residues 1–48 (MVDFLPKVTEINPPSEGNDGEDNIKPLSSGSEQRPLKEEGQQGGRRHH). Phosphoserine occurs at positions 52 and 53. Phosphothreonine is present on T88. Phosphoserine is present on S112. Residues R331, 338–339 (WD), N375, R384, 384–386 (RSQ), and G505 contribute to the substrate site. Residues D507 and E703 each act as proton donor/acceptor in the active site.

It belongs to the glycosyl hydrolase 37 family.

It carries out the reaction alpha,alpha-trehalose + H2O = alpha-D-glucose + beta-D-glucose. The polypeptide is Probable trehalase (NTH2) (Saccharomyces cerevisiae (strain ATCC 204508 / S288c) (Baker's yeast)).